A 426-amino-acid polypeptide reads, in one-letter code: MSKSARGWSDGFDPVYPYDADNDRPCPSSTLPSFSSDGFQEKPLGVLSLGPGRPCHTKNGEITLKLGEGVDLDDSGKLIANTVNKAIAPLSFFQQHHFPLTWIPLYTPKMENYPYKFLPPLSILKSTILNTLVSAFGSGLGLSGSALAVQLASPLTFDDKGNIKITLNRGLHVTTGDAIESNISWAKGIKFEDGAIATNIGKGSRFGTSSTETGVNNAYPIQVKLGSGLSFDSTGAIMAGNKDYDKLTLWTTPDPSPNCQILAENDAKLTLCLTMCDSQILATVSVLVVRSGNLNPITGTVSSAQVFLRFDANGVLLTEHSTSKKYWGYKQGDSIDGTPYTNAVGFMPNSTAYPKTQSSTTKNNIVGQVYMNGDVSKPMLLTITLNGTDDTTSAYSMSFSYTWTNGSYIGATFGANSYTFSYIAQQ.

This sequence belongs to the adenoviridae fiber family. In terms of assembly, homotrimer. Interacts with host receptor CXCAR. Interacts (via N-terminal tail region) with pentons.

The protein resides in the virion. It is found in the host nucleus. Forms spikes that protrude from each vertex of the icosahedral capsid. Interacts with host receptor CXCAR to provide virion initial attachment to target cell. Fiber proteins are shed during virus entry, when virus is still at the cell surface. The sequence is that of Fiber protein from Human adenovirus E serotype 4 (HAdV-4).